The sequence spans 865 residues: Envelope glycoprotein gp160 (865 aa).

The first 20 residues, 1 to 20, serve as a signal peptide directing secretion; it reads MRYTIITLGIIVIGIGIVLS. Topologically, residues 21-705 are extracellular; sequence KQWITVFYGI…SKWLNILKMG (685 aa). A glycan (N-linked (GlcNAc...) asparagine; by host) is linked at N35. C42 and C55 are disulfide-bonded. N68, N117, N150, N165, N195, N198, N210, N252, N255, N266, N276, N282, N294, N306, N316, N373, N414, N451, N488, and N491 each carry an N-linked (GlcNAc...) asparagine; by host glycan. 5 disulfide bridges follow: C101–C218, C108–C209, C113–C166, C231–C261, and C241–C253. Residues 113–165 form a V1 region; sequence CVELNSTRERATTPTTTPKSTGLPCVGPTSGENLQSCNASIIEREMEDEPASN. Residues 166-209 form a V2 region; sequence CTFAMAGYVRDQKKNYYSVVWNDAEIYCKNKTNSTSKECYMIHC. Residues 311–343 are V3; that stretch reads CRRPGNKTVLPVTIMAGLVFHSQKYNMKLRQAW. C311 and C344 are disulfide-bonded. C396 and C471 are joined by a disulfide. The tract at residues 403–444 is V4; that stretch reads CKMDWFLNYLNNKTWDAYHNFCSSKKKGHAPGPCVQRTYVAY. The segment at 487–494 is V5; that stretch reads KNRTNVTL. Positions 537-557 are fusion peptide; it reads VPFVLGFLGFLGAAGTAMGAA. An immunosuppression region spans residues 600–616; it reads LNARVTALEKYLEDQAR. N645 and N661 each carry an N-linked (GlcNAc...) asparagine; by host glycan. Residues 650-675 adopt a coiled-coil conformation; that stretch reads EWERQIADLESNITGQLVKAREQEEK. The segment at 682–703 is MPER; binding to GalCer; the sequence is KLTSWSDFWSWFDFSKWLNILK. The helical transmembrane segment at 706 to 726 threads the bilayer; the sequence is FLVIVGIIGLRLLYTVYGCIV. At 727 to 865 the chain is on the cytoplasmic side; the sequence is RVRQGYVPLS…VRQGLEEILN (139 aa). Residues 732 to 735 carry the YXXL motif; contains endocytosis signal motif; it reads YVPL. Positions 744–763 are disordered; it reads VGKGRPDNADEPGEGGDNSR.

The mature envelope protein (Env) consists of a homotrimer of non-covalently associated gp120-gp41 heterodimers. The resulting complex protrudes from the virus surface as a spike. Interacts with host CD4 and CCR5. Gp120 also interacts with the C-type lectins CD209/DC-SIGN and CLEC4M/DC-SIGNR (collectively referred to as DC-SIGN(R)). In terms of assembly, the mature envelope protein (Env) consists of a homotrimer of non-covalently associated gp120-gp41 heterodimers. The resulting complex protrudes from the virus surface as a spike. Post-translationally, specific enzymatic cleavages in vivo yield mature proteins. Envelope glycoproteins are synthesized as an inactive precursor that is heavily N-glycosylated and processed likely by host cell furin in the Golgi to yield the mature SU and TM proteins. The cleavage site between SU and TM requires the minimal sequence [KR]-X-[KR]-R.

The protein resides in the virion membrane. The protein localises to the host cell membrane. It is found in the host endosome membrane. In terms of biological role, the surface protein gp120 (SU) attaches the virus to the host lymphoid cell by binding to the primary receptor CD4. This interaction induces a structural rearrangement creating a high affinity binding site for a chemokine coreceptor like CCR5. This peculiar 2 stage receptor-interaction strategy allows gp120 to maintain the highly conserved coreceptor-binding site in a cryptic conformation, protected from neutralizing antibodies. These changes are transmitted to the transmembrane protein gp41 and are thought to activate its fusogenic potential by unmasking its fusion peptide. Its function is as follows. Surface protein gp120 (SU) may target the virus to gut-associated lymphoid tissue (GALT) by binding host ITGA4/ITGB7 (alpha-4/beta-7 integrins), a complex that mediates T-cell migration to the GALT. Interaction between gp120 and ITGA4/ITGB7 would allow the virus to enter GALT early in the infection, infecting and killing most of GALT's resting CD4+ T-cells. This T-cell depletion is believed to be the major insult to the host immune system leading to AIDS. Functionally, the surface protein gp120 is a ligand for CD209/DC-SIGN and CLEC4M/DC-SIGNR, which are respectively found on dendritic cells (DCs), and on endothelial cells of liver sinusoids and lymph node sinuses. These interactions allow capture of viral particles at mucosal surfaces by these cells and subsequent transmission to permissive cells. DCs are professional antigen presenting cells, critical for host immunity by inducing specific immune responses against a broad variety of pathogens. They act as sentinels in various tissues where they take up antigen, process it, and present it to T-cells following migration to lymphoid organs. SIV subverts the migration properties of dendritic cells to gain access to CD4+ T-cells in lymph nodes. Virus transmission to permissive T-cells occurs either in trans (without DCs infection, through viral capture and transmission), or in cis (following DCs productive infection, through the usual CD4-gp120 interaction), thereby inducing a robust infection. In trans infection, bound virions remain infectious over days and it is proposed that they are not degraded, but protected in non-lysosomal acidic organelles within the DCs close to the cell membrane thus contributing to the viral infectious potential during DCs' migration from the periphery to the lymphoid tissues. On arrival at lymphoid tissues, intact virions recycle back to DCs' cell surface allowing virus transmission to CD4+ T-cells. Virion capture also seems to lead to MHC-II-restricted viral antigen presentation, and probably to the activation of SIV-specific CD4+ cells. The transmembrane protein gp41 (TM) acts as a class I viral fusion protein. Under the current model, the protein has at least 3 conformational states: pre-fusion native state, pre-hairpin intermediate state, and post-fusion hairpin state. During fusion of viral and target intracellular membranes, the coiled coil regions (heptad repeats) assume a trimer-of-hairpins structure, positioning the fusion peptide in close proximity to the C-terminal region of the ectodomain. The formation of this structure appears to drive apposition and subsequent fusion of viral and target cell membranes. Complete fusion occurs in host cell endosomes. The virus undergoes clathrin-dependent internalization long before endosomal fusion, thus minimizing the surface exposure of conserved viral epitopes during fusion and reducing the efficacy of inhibitors targeting these epitopes. Membranes fusion leads to delivery of the nucleocapsid into the cytoplasm. In terms of biological role, the envelope glycoprotein gp160 precursor down-modulates cell surface CD4 antigen by interacting with it in the endoplasmic reticulum and blocking its transport to the cell surface. Its function is as follows. The gp120-gp41 heterodimer allows rapid transcytosis of the virus through CD4 negative cells such as simple epithelial monolayers of the intestinal, rectal and endocervical epithelial barriers. Both gp120 and gp41 specifically recognize glycosphingolipids galactosyl-ceramide (GalCer) or 3' sulfo-galactosyl-ceramide (GalS) present in the lipid rafts structures of epithelial cells. Binding to these alternative receptors allows the rapid transcytosis of the virus through the epithelial cells. This transcytotic vesicle-mediated transport of virions from the apical side to the basolateral side of the epithelial cells does not involve infection of the cells themselves. The chain is Envelope glycoprotein gp160 (env) from Simian immunodeficiency virus agm.vervet (isolate AGM TYO-1) (SIV-agm.ver).